Reading from the N-terminus, the 526-residue chain is GMP synthase [glutamine-hydrolyzing] (526 aa).

A Glutamine amidotransferase type-1 domain is found at 8-208; sequence CILIIDFGSQ…AVDICRCEVT (201 aa). The active-site Nucleophile is Cys85. Active-site residues include His182 and Glu184. The GMPS ATP-PPase domain occupies 209–401; the sequence is WKPVYIVKNI…LGLPLNVVNQ (193 aa). 236–242 contacts ATP; the sequence is SGGIDSL.

Homodimer.

It carries out the reaction XMP + L-glutamine + ATP + H2O = GMP + L-glutamate + AMP + diphosphate + 2 H(+). The protein operates within purine metabolism; GMP biosynthesis; GMP from XMP (L-Gln route): step 1/1. Functionally, catalyzes the synthesis of GMP from XMP. The protein is GMP synthase [glutamine-hydrolyzing] of Blochmanniella floridana.